We begin with the raw amino-acid sequence, 147 residues long: MKLHELKPAQGSTKAPKRLGRGIGSGTGKTSGKGHKGQKARAGGGVRPGFEGGQQPLARRMPKRGFTNIFKKEYVVLNVRDLEERFENGAVVGYESLFEVGLIKTIKDGVKILGTGELTKALTVQVDKVSQTAAEKIVAAGGKVEVE.

A disordered region spans residues 1-58 (MKLHELKPAQGSTKAPKRLGRGIGSGTGKTSGKGHKGQKARAGGGVRPGFEGGQQPLA). Composition is skewed to gly residues over residues 21-31 (RGIGSGTGKTS) and 42-52 (AGGGVRPGFEG).

This sequence belongs to the universal ribosomal protein uL15 family. In terms of assembly, part of the 50S ribosomal subunit.

Its function is as follows. Binds to the 23S rRNA. The polypeptide is Large ribosomal subunit protein uL15 (Desulfitobacterium hafniense (strain Y51)).